A 228-amino-acid chain; its full sequence is MAKDTTGRLRVTVKTGGKRKLSSKLWLERQLNDPYVAQAKRDGWRSRAAYKLIEMDDKYHFLKPGLAVVDLGAAPGGWSQVAARRVGAVDGKGKVVAIDLLEMPEIVGVTFARLDFLDADAPEKLIAMMEGGADIVLSDMAANTTGHRKTDQLRIIGLVESAAAFAADVLRPGGTFIAKVFQSGADADLLVQLKRDFRTVRHVKPASSRQDSSERYVMATGFRGTPAV.

The S-adenosyl-L-methionine site is built by Gly-76, Trp-78, Asp-99, Asp-115, and Asp-139. Lys-179 (proton acceptor) is an active-site residue.

Belongs to the class I-like SAM-binding methyltransferase superfamily. RNA methyltransferase RlmE family.

It localises to the cytoplasm. It carries out the reaction uridine(2552) in 23S rRNA + S-adenosyl-L-methionine = 2'-O-methyluridine(2552) in 23S rRNA + S-adenosyl-L-homocysteine + H(+). Functionally, specifically methylates the uridine in position 2552 of 23S rRNA at the 2'-O position of the ribose in the fully assembled 50S ribosomal subunit. This Nitrobacter hamburgensis (strain DSM 10229 / NCIMB 13809 / X14) protein is Ribosomal RNA large subunit methyltransferase E.